The chain runs to 131 residues: Encapsulated ferritin-like protein (131 aa).

Fe cation-binding residues include Glu-30, Glu-60, and His-63. The disordered stretch occupies residues Glu-96–Asp-131. Residues Glu-98–Asp-131 form a targeting peptide region. Residues Ser-102–Ser-115 show a composition bias toward low complexity.

The protein belongs to the ferritin-like superfamily. EncFtn family. In terms of assembly, forms dimers at all pH tested; under acidic conditions formes decamers. The N-terminal domain (residues 1-97) crystallizes as a decameric ring. Four decamers are loaded in the encapsulin nanocompartment in a tetrahedral arrangement. A 3 nm gap is consistently seen between the shell and the cargo. The target peptide extends away from the decameric ring, to allow binding to the interior of the encapsulin nanocompartment shell.

Its subcellular location is the encapsulin nanocompartment. The enzyme catalyses 4 Fe(2+) + O2 + 4 H(+) = 4 Fe(3+) + 2 H2O. Its activity is regulated as follows. The ferroxidase activity is inhibited by zinc. Cargo protein of a type 1 encapsulin nanocompartment. A ferritin-like ferroxidase that converts Fe(2+) to Fe(3+) iron inside the encapsulin nanocompartment. Mineralized Fe(3+) is released to the exterior of the decameric complex for deposition in the encapsulin nanocompartment. In solution the decamer binds 10-15 iron cations; in the encapsulin nanocompartment the decamer can bind up to 48 ions, perhaps via its internal channel, and on its exterior. The cargo-loaded nanocompartment maximally sequesters up to 4150 Fe ions. The protein is Encapsulated ferritin-like protein of Haliangium ochraceum (strain DSM 14365 / JCM 11303 / SMP-2).